A 172-amino-acid polypeptide reads, in one-letter code: Protein-export protein SecB (172 aa).

It belongs to the SecB family. As to quaternary structure, homotetramer, a dimer of dimers. One homotetramer interacts with 1 SecA dimer.

The protein resides in the cytoplasm. Functionally, one of the proteins required for the normal export of preproteins out of the cell cytoplasm. It is a molecular chaperone that binds to a subset of precursor proteins, maintaining them in a translocation-competent state. It also specifically binds to its receptor SecA. The sequence is that of Protein-export protein SecB from Cupriavidus pinatubonensis (strain JMP 134 / LMG 1197) (Cupriavidus necator (strain JMP 134)).